A 417-amino-acid chain; its full sequence is Transmembrane protease serine 11G (417 aa).

At 1–22 (MYQPGILGRRKRVCKPWTVALT) the chain is on the cytoplasmic side. The helical; Signal-anchor for type II membrane protein transmembrane segment at 23-43 (TTAALLALAVLIGLLVYFLVY) threads the bilayer. Residues 44–417 (EEKTHYYQAS…RNWIKSKTNI (374 aa)) lie on the Extracellular side of the membrane. One can recognise an SEA domain in the interval 46 to 165 (KTHYYQASFW…PYLREMNAAQ (120 aa)). A Peptidase S1 domain is found at 186-416 (IADGKPAGSN…YRNWIKSKTN (231 aa)). Cys-211 and Cys-227 form a disulfide bridge. Residues His-226 and Asp-271 each act as charge relay system in the active site. 2 disulfide bridges follow: Cys-336/Cys-352 and Cys-363/Cys-392. Ser-367 functions as the Charge relay system in the catalytic mechanism.

It belongs to the peptidase S1 family. Highest expression in lung and tongue. Also expressed in brain, colon, heart and liver. Isoform 1 is the predominant form in tongue whereas both isoforms are expressed in similar amounts in lung. At the cellular level, expression is confined to epithelial cells within the cleft of the circumvallate papillae extending into the ducts of the minor salivary glands, the respiratory epithelium of the nasal cavity and tear gland ducts.

The protein localises to the membrane. This chain is Transmembrane protease serine 11G (Tmprss11g), found in Rattus norvegicus (Rat).